The sequence spans 522 residues: Man(5)GlcNAc(2)-PP-dolichol translocation protein RFT1 (522 aa).

Helical transmembrane passes span 35 to 55 (DVLG…LFLT), 75 to 95 (LLWL…YLWY), 108 to 128 (VLLS…FSVI), 143 to 165 (FAIG…LFMF), 177 to 197 (AQYI…YIYI), 322 to 342 (VVGV…PVVI), 354 to 374 (GGAL…INGI), 400 to 420 (IIHL…GFIV), 457 to 477 (TSIF…LFAT), and 479 to 499 (PGLS…ILTA).

Belongs to the RFT1 family.

The protein localises to the endoplasmic reticulum membrane. Its pathway is protein modification; protein glycosylation. In terms of biological role, intramembrane glycolipid transporter that operates in the biosynthetic pathway of dolichol-linked oligosaccharides, the glycan precursors employed in protein asparagine (N)-glycosylation. The sequential addition of sugars to dolichol pyrophosphate produces dolichol-linked oligosaccharides containing fourteen sugars, including two GlcNAcs, nine mannoses and three glucoses. Once assembled, the oligosaccharide is transferred from the lipid to nascent proteins by oligosaccharyltransferases. The assembly of dolichol-linked oligosaccharides begins on the cytosolic side of the endoplasmic reticulum membrane and finishes in its lumen. RFT1 could mediate the translocation of the cytosolically oriented intermediate DolPP-GlcNAc2Man5, produced by ALG11, into the ER lumen where dolichol-linked oligosaccharides assembly continues. However, the intramembrane lipid transporter activity could not be confirmed in vitro. This Caenorhabditis elegans protein is Man(5)GlcNAc(2)-PP-dolichol translocation protein RFT1.